We begin with the raw amino-acid sequence, 494 residues long: Cheilanthifoline synthase (494 aa).

The chain crosses the membrane as a helical span at residues 4–24 (TIWLIISTVIIVLGIAKFLLG). Cysteine 437 lines the heme pocket.

The protein belongs to the cytochrome P450 family. Requires heme as cofactor. As to expression, expressed in roots and at lower levels in stems, leaves and plantlets.

Its subcellular location is the endoplasmic reticulum membrane. The enzyme catalyses (S)-scoulerine + reduced [NADPH--hemoprotein reductase] + O2 = (S)-cheilanthifoline + oxidized [NADPH--hemoprotein reductase] + 2 H2O + H(+). In terms of biological role, methylenedioxy bridge-forming cytochrome P450 involved in the biosynthesis of isoquinoline alkaloids. Converts (S)-scoulerine into (S)-cheilanthifoline, a precursor of sanguinarine. Catalyzes an oxidative reaction that does not incorporate oxygen into the product. This is Cheilanthifoline synthase from Argemone mexicana (Mexican prickly poppy).